The sequence spans 188 residues: Phosphoheptose isomerase (188 aa).

The region spanning 33–188 (VTASLRAGGK…CGLVEDALCS (156 aa)) is the SIS domain. 48-50 (NGG) contacts substrate. His-57 and Glu-61 together coordinate Zn(2+). Substrate is bound by residues Glu-61, 90-91 (ND), 116-118 (STS), Ser-121, and Gln-168. Zn(2+)-binding residues include Gln-168 and His-176.

It belongs to the SIS family. GmhA subfamily. Homotetramer. It depends on Zn(2+) as a cofactor.

It localises to the cytoplasm. The catalysed reaction is 2 D-sedoheptulose 7-phosphate = D-glycero-alpha-D-manno-heptose 7-phosphate + D-glycero-beta-D-manno-heptose 7-phosphate. The protein operates within carbohydrate biosynthesis; D-glycero-D-manno-heptose 7-phosphate biosynthesis; D-glycero-alpha-D-manno-heptose 7-phosphate and D-glycero-beta-D-manno-heptose 7-phosphate from sedoheptulose 7-phosphate: step 1/1. Catalyzes the isomerization of sedoheptulose 7-phosphate in D-glycero-D-manno-heptose 7-phosphate. In Rhodospirillum rubrum (strain ATCC 11170 / ATH 1.1.1 / DSM 467 / LMG 4362 / NCIMB 8255 / S1), this protein is Phosphoheptose isomerase.